Consider the following 61-residue polypeptide: Chromatin protein Cren7 (61 aa).

It belongs to the Cren7 family. Monomer. Post-translationally, methylated at multiple sites, to varying extents.

It is found in the chromosome. Its subcellular location is the cytoplasm. Functionally, a chromatin protein, binds double-stranded DNA without sequence specificity. Constrains negative DNA supercoils. The sequence is that of Chromatin protein Cren7 from Caldivirga maquilingensis (strain ATCC 700844 / DSM 13496 / JCM 10307 / IC-167).